The following is a 182-amino-acid chain: NAD(P)H-quinone oxidoreductase subunit I, chloroplastic (182 aa).

2 4Fe-4S ferredoxin-type domains span residues 52–81 (GRIH…VDWE) and 92–121 (KSYS…MTEE). [4Fe-4S] cluster contacts are provided by C61, C64, C67, C71, C101, C104, C107, and C111.

It belongs to the complex I 23 kDa subunit family. NDH is composed of at least 16 different subunits, 5 of which are encoded in the nucleus. It depends on [4Fe-4S] cluster as a cofactor.

It localises to the plastid. Its subcellular location is the chloroplast thylakoid membrane. It carries out the reaction a plastoquinone + NADH + (n+1) H(+)(in) = a plastoquinol + NAD(+) + n H(+)(out). The catalysed reaction is a plastoquinone + NADPH + (n+1) H(+)(in) = a plastoquinol + NADP(+) + n H(+)(out). Functionally, NDH shuttles electrons from NAD(P)H:plastoquinone, via FMN and iron-sulfur (Fe-S) centers, to quinones in the photosynthetic chain and possibly in a chloroplast respiratory chain. The immediate electron acceptor for the enzyme in this species is believed to be plastoquinone. Couples the redox reaction to proton translocation, and thus conserves the redox energy in a proton gradient. This Chaetosphaeridium globosum (Charophycean green alga) protein is NAD(P)H-quinone oxidoreductase subunit I, chloroplastic.